Reading from the N-terminus, the 207-residue chain is Guanylate kinase (207 aa).

Positions 5–185 constitute a Guanylate kinase-like domain; it reads GFVLLISGPS…SYEALRAILI (181 aa). 12 to 19 lines the ATP pocket; the sequence is GPSGAGKS.

This sequence belongs to the guanylate kinase family.

The protein resides in the cytoplasm. The enzyme catalyses GMP + ATP = GDP + ADP. Essential for recycling GMP and indirectly, cGMP. This is Guanylate kinase (gmk) from Campylobacter jejuni subsp. jejuni serotype O:2 (strain ATCC 700819 / NCTC 11168).